A 111-amino-acid polypeptide reads, in one-letter code: Universal stress protein B (111 aa).

Helical transmembrane passes span 1 to 21 and 90 to 110; these read MIST…NMAR and FILT…LMIW.

The protein belongs to the universal stress protein B family.

It localises to the cell inner membrane. The protein is Universal stress protein B of Cronobacter sakazakii (strain ATCC BAA-894) (Enterobacter sakazakii).